We begin with the raw amino-acid sequence, 318 residues long: tRNA U34 carboxymethyltransferase (318 aa).

Carboxy-S-adenosyl-L-methionine contacts are provided by residues Lys-88, Trp-102, Lys-107, Gly-126, 176–177 (LE), Met-192, Tyr-196, and Arg-311.

This sequence belongs to the class I-like SAM-binding methyltransferase superfamily. CmoB family. Homotetramer.

It catalyses the reaction carboxy-S-adenosyl-L-methionine + 5-hydroxyuridine(34) in tRNA = 5-carboxymethoxyuridine(34) in tRNA + S-adenosyl-L-homocysteine + H(+). Its function is as follows. Catalyzes carboxymethyl transfer from carboxy-S-adenosyl-L-methionine (Cx-SAM) to 5-hydroxyuridine (ho5U) to form 5-carboxymethoxyuridine (cmo5U) at position 34 in tRNAs. This Pseudomonas putida (strain GB-1) protein is tRNA U34 carboxymethyltransferase.